Reading from the N-terminus, the 459-residue chain is tRNA(Ile)-lysidine synthase (459 aa).

38–43 is an ATP binding site; the sequence is SGGMDS.

Belongs to the tRNA(Ile)-lysidine synthase family.

The protein localises to the cytoplasm. It catalyses the reaction cytidine(34) in tRNA(Ile2) + L-lysine + ATP = lysidine(34) in tRNA(Ile2) + AMP + diphosphate + H(+). Its function is as follows. Ligates lysine onto the cytidine present at position 34 of the AUA codon-specific tRNA(Ile) that contains the anticodon CAU, in an ATP-dependent manner. Cytidine is converted to lysidine, thus changing the amino acid specificity of the tRNA from methionine to isoleucine. The protein is tRNA(Ile)-lysidine synthase of Acinetobacter baylyi (strain ATCC 33305 / BD413 / ADP1).